The primary structure comprises 352 residues: Quinolinate synthase (352 aa).

Positions 48 and 69 each coordinate iminosuccinate. Cysteine 114 contacts [4Fe-4S] cluster. Iminosuccinate contacts are provided by residues 140-142 (YAN) and serine 157. Residue cysteine 201 participates in [4Fe-4S] cluster binding. Iminosuccinate is bound by residues 227-229 (HPE) and threonine 244. Cysteine 298 contributes to the [4Fe-4S] cluster binding site.

This sequence belongs to the quinolinate synthase family. Type 1 subfamily. [4Fe-4S] cluster is required as a cofactor.

The protein localises to the cytoplasm. The catalysed reaction is iminosuccinate + dihydroxyacetone phosphate = quinolinate + phosphate + 2 H2O + H(+). Its pathway is cofactor biosynthesis; NAD(+) biosynthesis; quinolinate from iminoaspartate: step 1/1. Functionally, catalyzes the condensation of iminoaspartate with dihydroxyacetone phosphate to form quinolinate. The polypeptide is Quinolinate synthase (Pseudomonas putida (strain ATCC 700007 / DSM 6899 / JCM 31910 / BCRC 17059 / LMG 24140 / F1)).